The primary structure comprises 283 residues: Pantothenate synthetase (283 aa).

30–37 (MGALHEGH) contributes to the ATP binding site. The Proton donor role is filled by His37. Gln61 serves as a coordination point for (R)-pantoate. Residue Gln61 coordinates beta-alanine. 149-152 (GEKD) contacts ATP. Residue Gln155 participates in (R)-pantoate binding. ATP contacts are provided by residues Leu178 and 186-189 (RSSR).

This sequence belongs to the pantothenate synthetase family. As to quaternary structure, homodimer.

It is found in the cytoplasm. The enzyme catalyses (R)-pantoate + beta-alanine + ATP = (R)-pantothenate + AMP + diphosphate + H(+). Its pathway is cofactor biosynthesis; (R)-pantothenate biosynthesis; (R)-pantothenate from (R)-pantoate and beta-alanine: step 1/1. Its function is as follows. Catalyzes the condensation of pantoate with beta-alanine in an ATP-dependent reaction via a pantoyl-adenylate intermediate. This Christiangramia forsetii (strain DSM 17595 / CGMCC 1.15422 / KT0803) (Gramella forsetii) protein is Pantothenate synthetase.